The primary structure comprises 770 residues: ARF GTPase-activating protein GIT1 (770 aa).

The region spanning 1 to 124 is the Arf-GAP domain; the sequence is MSRKGPRAEV…AFVHKLPCRD (124 aa). The interval 1 to 124 is interaction with gamma-tubulin and localization to the centrosome; it reads MSRKGPRAEV…AFVHKLPCRD (124 aa). A C4-type zinc finger spans residues 11 to 34; sequence CADCSAPDPGWASISRGVLVCDEC. ANK repeat units lie at residues 132–161, 166–195, and 199–228; these read DLSK…QANF, KGTT…DPGS, and NGRT…ELTD. A Phosphotyrosine modification is found at Y224. The interaction with PCLO stretch occupies residues 245–374; that stretch reads HYIIPQMADR…QGKSLSSPTD (130 aa). Residues 253-424 are interaction with PTK2/FAK1; the sequence is DRSRQKCMSQ…NRARSMDSSD (172 aa). The interval 254–376 is interaction with ARHGEF7; it reads RSRQKCMSQS…KSLSSPTDNL (123 aa). The segment at 363-425 is disordered; the sequence is RQQGKSLSSP…RARSMDSSDL (63 aa). Residues 366–383 show a composition bias toward polar residues; that stretch reads GKSLSSPTDNLELSARSQ. Phosphoserine is present on residues S368 and S371. T373 bears the Phosphothreonine mark. The segment at 375–596 is interaction with NCK2 and GRIN3A; the sequence is NLELSARSQS…QEGSRHASKL (222 aa). The tract at residues 375–596 is required for localization at synapses; that stretch reads NLELSARSQS…QEGSRHASKL (222 aa). A phosphoserine mark is found at S379 and S384. At Y392 the chain carries Phosphotyrosine. S394 and S397 each carry phosphoserine. Acidic residues predominate over residues 394-403; that stretch reads SVASDEDTDQ. T401 is modified (phosphothreonine). S419, S422, and S426 each carry phosphoserine. The segment at 420-475 is interaction with MAPK1; that stretch reads MDSSDLSDGAVTLQEYLELKKALATSEAKVQQLMKVNSSLSDELRRLQREIHKLQA. The interaction with IKBKG stretch occupies residues 429–629; sequence AVTLQEYLEL…EGKRFLELSK (201 aa). A coiled-coil region spans residues 449–483; it reads VQQLMKVNSSLSDELRRLQREIHKLQAENLQLRQP. A phosphoserine mark is found at S507 and S545. T546 carries the phosphothreonine modification. 2 positions are modified to phosphotyrosine: Y554 and Y563. Residues S570, S580, S601, and S605 each carry the phosphoserine modification. Residues 578-588 are compositionally biased toward polar residues; it reads PSSPLLSCSQE. Positions 578–615 are disordered; that stretch reads PSSPLLSCSQEGSRHASKLSRHGSGADSDYENTQSGDP. The residue at position 610 (T610) is a Phosphothreonine. S639 bears the Phosphoserine mark. The tract at residues 646-770 is interaction with PXN and TGFB1I1; it reads PGLPSTEDVI…VTITTREKKQ (125 aa).

As to quaternary structure, forms homodimers and possibly oligomers. May forms heterooligomers with GIT2. Interacts with G protein-coupled receptor kinases, including GRK2, GRK3, GRK5 and GRK6. Interacts with PPFIA1, PPFIA2 and PPFIA4. Interacts with GRIP1 and forms a ternary complex with PPFIA1 and GRIP1. Directly interacts with ARHGEF7/beta-PIX, forming in vitro a heptameric complex made of a GIT1 dimer and an ARHGEF7 trimer. Directly interacts with PXN/paxillin; this interaction is enhanced in the presence of ARHGEF7. Directly interacts (via C-terminus) with TGFB1I1/Hic-5 (via LD motif 3). Directly interacts with PTK2/FAK1. May interact with PTK2B/PYK2; this interaction may be indirect. Interacts with AMPA receptors GRIA2/3. Directly interacts with protein Piccolo/PCLO. Forms a complex with Ephrin-B1/EFNB1 and NCK2/GRB4 (via SH2); this interaction is important for spine morphogenesis and synapse formation. Interaction with NCK2 is transient and depends upon GIT1 phosphorylation at Tyr-392. Interacts with GRIN3A/GluN3A (via C-terminus); this interaction competes with GIT1 interaction with ARHGEF7 and limits synaptic localization of GIT1. Interacts with IKBKG/NEMO in resting bone mesenchymal stem cells, as well as in TNF-stimulated cells; this interaction may increase IKBKG affinity for 'Lys-63'-linked polyubiquitin chains. Interacts with GABA(A) receptors, including GABRB3 and GABRG2. Interacts with SCRIB. Interacts (via N- and C-terminus) with ENTR1/SDCCAG3 (via N-terminus); this interaction is direct. May form a tripartite complex with ENTR1 and PTPN13. Interacts with YWHAZ. Interacts with PAK1. Interacts with PAK3. Directly interacts (via N-terminus) with gamma-tubulin. Interacts with MAPK1 and MAPK3; this interaction is required for MAPK1/3 recruitment to focal adhesions. In terms of processing, phosphorylated on tyrosine residues by PTK2/FAK1 and SRC in growing fibroblasts. Phosphorylation at Tyr-392 is induced by activation of Ephrin-B1/EFNB1 and catalyzed by SRC family kinases. It is required for the interaction with NCK2 and for GIT1 recruitment to synapses in hippocampal neurons. As to expression, expressed in the brain (at protein level). Also expressed at high levels in lung and heart. In lung, expressed in endothelial cells, especially in capillaries; also expressed in smooth muscle and epithelial cells of bronchi (at protein level). Expressed in bone marrow mesenchymal stem cells, as well as in osteoclasts and bone marrow-derived macrophages (at protein level).

The protein localises to the cytoplasm. It is found in the presynapse. It localises to the postsynapse. The protein resides in the postsynaptic density. Its subcellular location is the cell junction. The protein localises to the focal adhesion. It is found in the cell projection. It localises to the lamellipodium. The protein resides in the cytoskeleton. Its subcellular location is the microtubule organizing center. The protein localises to the centrosome. It is found in the spindle pole. Functionally, GTPase-activating protein for ADP ribosylation factor family members, including ARF1. Multidomain scaffold protein that interacts with numerous proteins and therefore participates in many cellular functions, including receptor internalization, focal adhesion remodeling, and signaling by both G protein-coupled receptors and tyrosine kinase receptors. Through PAK1 activation, positively regulates microtubule nucleation during interphase. Plays a role in the regulation of cytokinesis; for this function, may act in a pathway also involving ENTR1 and PTPN13. May promote cell motility both by regulating focal complex dynamics and by the activation of RAC1. May act as scaffold for MAPK1/3 signal transduction, recruiting MAPK1/3 to focal adhesions after EGF stimulation via a Src-dependent pathway, hence stimulating cell migration. Plays a role in brain development and function. Involved in the regulation of spine density and synaptic plasticity that is required for processes involved in learning. Plays an important role in dendritic spine morphogenesis and synapse formation. In hippocampal neurons, recruits guanine nucleotide exchange factors (GEFs), such as ARHGEF7/beta-PIX, to the synaptic membrane. These in turn locally activate RAC1, which is an essential step for spine morphogenesis and synapse formation. May contribute to the organization of presynaptic active zones through oligomerization and formation of a Piccolo/PCLO-based protein network, which includes ARHGEF7/beta-PIX and FAK1. In neurons, through its interaction with liprin-alpha family members, may be required for AMPA receptor (GRIA2/3) proper targeting to the cell membrane. In complex with GABA(A) receptors and ARHGEF7, plays a crucial role in regulating GABA(A) receptor synaptic stability, maintaining GPHN/gephyrin scaffolds and hence GABAergic inhibitory synaptic transmission, by locally coordinating RAC1 and PAK1 downstream effector activity, leading to F-actin stabilization. May also be important for RAC1 downstream signaling pathway through PAK3 and regulation of neuronal inhibitory transmission at presynaptic input. Required for successful bone regeneration during fracture healing. The function in intramembranous ossification may, at least partly, exerted by macrophages in which GIT1 is a key negative regulator of redox homeostasis, IL1B production, and glycolysis, acting through the ERK1/2/NRF2/NFE2L2 axis. May play a role in angiogenesis during fracture healing. In this process, may regulate activation of the canonical NF-kappa-B signal in bone mesenchymal stem cells by enhancing the interaction between NEMO and 'Lys-63'-ubiquitinated RIPK1/RIP1, eventually leading to enhanced production of VEGFA and others angiogenic factors. Essential for VEGF signaling through the activation of phospholipase C-gamma and ERK1/2, hence may control endothelial cell proliferation and angiogenesis. The chain is ARF GTPase-activating protein GIT1 (Git1) from Mus musculus (Mouse).